The following is a 1396-amino-acid chain: DNA-directed RNA polymerase subunit beta' (1396 aa).

Zn(2+)-binding residues include Cys72, Cys74, Cys87, and Cys90. The Mg(2+) site is built by Asp463, Asp465, and Asp467. Residues Cys814, Cys889, Cys896, and Cys899 each contribute to the Zn(2+) site.

Belongs to the RNA polymerase beta' chain family. As to quaternary structure, the RNAP catalytic core consists of 2 alpha, 1 beta, 1 beta' and 1 omega subunit. When a sigma factor is associated with the core the holoenzyme is formed, which can initiate transcription. Mg(2+) is required as a cofactor. Requires Zn(2+) as cofactor.

It catalyses the reaction RNA(n) + a ribonucleoside 5'-triphosphate = RNA(n+1) + diphosphate. Functionally, DNA-dependent RNA polymerase catalyzes the transcription of DNA into RNA using the four ribonucleoside triphosphates as substrates. The protein is DNA-directed RNA polymerase subunit beta' of Chlamydia trachomatis serovar L2 (strain ATCC VR-902B / DSM 19102 / 434/Bu).